Here is a 477-residue protein sequence, read N- to C-terminus: Diacylglycerol O-acyltransferase 1-2 (477 aa).

A disordered region spans residues 1 to 48 (MAPPPSLAPDRGGGEPDDALRLRARAAAAAGDAPAPQQQQEQRHQEQQ). Positions 12 to 21 (GGGEPDDALR) are enriched in basic and acidic residues. Residues 25–40 (RAAAAAGDAPAPQQQQ) are compositionally biased toward low complexity. 7 helical membrane-spanning segments follow: residues 79–99 (HAGLLNLCIVVLVAVNSRLII), 123–143 (WPLLMCCLTLPTFPLAALMVE), 155–175 (VVILLHIVITTSVLVYPVVVI), 182–202 (VLSGFVLMFLASIIWLKLVSF), 230–250 (NIKWPTFKRLSYFMLAPTLCY), 263–283 (GWVVRQLIKCLVFTGLMGFII), and 319–339 (VWLCMFYCFFHLWLNILAELL). The FYXDWWN motif signature appears at 346-352 (FYKDWWN). Transmembrane regions (helical) follow at residues 387–407 (GVAILISFLVSAAFHELCVAV), 409–429 (CHIFKFWAFIGIMFQIPLVFL), and 442–462 (VGNMIFWFFFSILGQPMCVLL). Residue His-401 is part of the active site.

The protein belongs to the membrane-bound acyltransferase family. Sterol o-acyltransferase subfamily.

The protein resides in the endoplasmic reticulum membrane. It catalyses the reaction an acyl-CoA + a 1,2-diacyl-sn-glycerol = a triacyl-sn-glycerol + CoA. It participates in glycerolipid metabolism; triacylglycerol biosynthesis. Its function is as follows. Involved in triacylglycerol (TAG) synthesis. Catalyzes the acylation of the sn-3 hydroxy group of sn-1,2-diacylglycerol using acyl-CoA. In Oryza sativa subsp. japonica (Rice), this protein is Diacylglycerol O-acyltransferase 1-2.